Consider the following 344-residue polypeptide: Tripartite motif-containing protein 44 (344 aa).

2 disordered regions span residues 1–25 (MASG…EPDE) and 68–165 (TPPA…EFDP). Positions 75-92 (GAGKEEAEVKVEQEREIE) are enriched in basic and acidic residues. The span at 93-165 (SEAGEESESE…ETEAESEFDP (73 aa)) shows a compositional bias: acidic residues. Residues 174–215 (VAKRKCPDHGLDLSTYCQEDRQLICVLCPVIGAHQGHQLSTL) form a B box-type zinc finger. Zn(2+) is bound by residues Cys179, His182, Cys201, and His207. Residues 290 to 325 (AHVTEILADIQSHMDRLMTQMAQAKEQLDTSNESAE) adopt a coiled-coil conformation. A disordered region spans residues 309-344 (QMAQAKEQLDTSNESAEPKAEGDEEGPSGASEEEDT). The segment covering 330–344 (GDEEGPSGASEEEDT) has biased composition (acidic residues). Phosphoserine occurs at positions 336 and 339.

In terms of assembly, interacts (via coiled coil) with TRIM17 (via coiled coil).

May play a role in the process of differentiation and maturation of neuronal cells. May regulate the activity of TRIM17. Is a negative regulator of PAX6 expression. This is Tripartite motif-containing protein 44 (TRIM44) from Pongo abelii (Sumatran orangutan).